The chain runs to 168 residues: MELLSRALFFFLLLSVLSSFSSSSFISDGVFESQSLVLGRNLLQTKKTCPVNFEFMNYTIITSKCKGPKYPPKECCGAFKDFACPYTDQLNDLSSDCATTMFSYINLYGKYPPGLFANQCKEGKEGLECPAGSQLPPETSAEVNAATTSSSRLWLTVSAALLVFVKLF.

Positions Met1–Ser23 are cleaved as a signal peptide. An N-linked (GlcNAc...) asparagine glycan is attached at Asn57. Asn144 carries GPI-anchor amidated asparagine lipidation. A propeptide spans Ala145–Phe168 (removed in mature form).

Interacts with FER. As to expression, expressed in pollen, pollen tubes, sporophytic pistil tissues, in the early stages of female gametophyte development, and in unfertilized, mature ovules. Expressed in roots, lateral roots, shoots, cotyledons, petioles, developing leaves and anther filaments.

The protein localises to the cell membrane. In terms of biological role, component of the FER-regulated Rho GTPase signaling complex. Acts as a chaperone and coreceptor for FER. Required for localization of FER to the plasma membrane. This Arabidopsis thaliana (Mouse-ear cress) protein is GPI-anchored protein LLG1.